Here is a 1978-residue protein sequence, read N- to C-terminus: Centrosomal protein Cep290 (1978 aa).

Positions 1–650 are necessary and sufficient for function in ciliogenesis, transition zone (TZ) assembly, and recruitment of DZP1 and Mks1 to the TZ. Also required for subcellular localization to the cilium basal body; the sequence is MSMDIPETVS…SLCEVPEIAE (650 aa). Coiled-coil stretches lie at residues 76–384 and 471–505; these read DRRL…KSQQ and IERL…LQQD. A disordered region spans residues 271–296; the sequence is QLEGKSISSGQTNSSNSQSQQEEEHA. Residues 276–290 are compositionally biased toward low complexity; it reads SISSGQTNSSNSQSQ. The disordered stretch occupies residues 663 to 688; the sequence is ATRPSSPTEATMGLRRPTVPDPEEKP. Coiled coils occupy residues 853-887, 922-970, and 1192-1233; these read FEEQ…ANEQ, LAKV…TQQD, and ADAV…SRSE. Positions 1313-1324 are enriched in basic and acidic residues; it reads KEKLRQKPEVPV. A disordered region spans residues 1313 to 1397; sequence KEKLRQKPEV…EKQDTEELKE (85 aa). A compositionally biased stretch (low complexity) spans 1329-1341; it reads STDSRSSSSSDSS. Acidic residues predominate over residues 1379–1391; that stretch reads VTEEPEGEEEKQD. Coiled-coil stretches lie at residues 1405 to 1439 and 1501 to 1654; these read IKDL…CQER and LNRT…LESK. Disordered regions lie at residues 1684 to 1714 and 1859 to 1884; these read VGVS…AHHH and LKDG…RLQQ. A compositionally biased stretch (polar residues) spans 1693-1708; it reads PSESPETYTGPSSECS. Residues 1726–1935 adopt a coiled-coil conformation; that stretch reads IEALKSRIEL…KEQLVKKTQL (210 aa).

Interacts (via N-terminus) with DZIP1. As to expression, expressed in sensory neurons type I and in germ cells (at protein level).

It localises to the cytoplasm. It is found in the cytoskeleton. Its subcellular location is the cilium basal body. The protein resides in the microtubule organizing center. The protein localises to the centrosome. It localises to the centriole. In terms of biological role, essential for ciliogenesis in sensory neurons and spermatocytes. During neuron and spermatocyte ciliogenesis, essential for initiating transition zone (TZ) assembly and is required for the formation of diverse connections between microtubules and between microtubules and the membrane. Regulates TZ assembly by recruiting DZIP1 to the plasma membrane where it promotes early ciliary membrane formation resulting in the initiation of TZ assembly. The sequence is that of Centrosomal protein Cep290 from Drosophila melanogaster (Fruit fly).